Here is a 417-residue protein sequence, read N- to C-terminus: MRFFETLALALLTTGALAAPFRHPHHLLNKRDVSVVTSKVYAYTTVTLEAAASAISTNGAAKEAATAAGDAETTSSVAASVTPAASSSVAASVTPVASSSVAASVTPVSSSAVVDSATSAAASSSVIPTSSSVVASSSEVASSTTSSAAASATSTGSSSGGFQDGVYDCTDFPSDQSGVVALDYLGYGGYSGIQIGDGAGSSCVEGAYCSYACSPGMLKTQWPSTQPSDGETRGGLLCKGGKLYRTNTAYDNLCENGVGTASVQNTLGQGVAICQTDYPGSENMVIPTYVGGGATSPLSVTDNANYFQWEGKGTSAQYYVNKAGYTAEQGCQWGTSSGDYGNWSPLVFGAGMTDGTTWLSISQNPLTSQLANYNVKIVGADGASVSGTCVFENGAFQNGGSGCTVGITSGSGVFVFY.

A signal peptide spans 1-18 (MRFFETLALALLTTGALA).

The protein belongs to the SUN family.

The protein localises to the secreted. Its subcellular location is the cell wall. Involved in cell wall synthesis. May be required for the activation of 1,3-beta-glucan synthase. This Schizosaccharomyces pombe (strain 972 / ATCC 24843) (Fission yeast) protein is Probable secreted beta-glucosidase PSU1 (psu1).